The following is a 371-amino-acid chain: Aminomethyltransferase (371 aa).

Belongs to the GcvT family. In terms of assembly, the glycine cleavage system is composed of four proteins: P, T, L and H.

It carries out the reaction N(6)-[(R)-S(8)-aminomethyldihydrolipoyl]-L-lysyl-[protein] + (6S)-5,6,7,8-tetrahydrofolate = N(6)-[(R)-dihydrolipoyl]-L-lysyl-[protein] + (6R)-5,10-methylene-5,6,7,8-tetrahydrofolate + NH4(+). Its function is as follows. The glycine cleavage system catalyzes the degradation of glycine. The chain is Aminomethyltransferase from Cutibacterium acnes (strain DSM 16379 / KPA171202) (Propionibacterium acnes).